Here is a 273-residue protein sequence, read N- to C-terminus: MIIDCRSISKEIDEETLKLLTICKTKPKLVSFTINPDSGTISYLKSQQKKARSLGIEYETRVLDSVDDLKSDILNASKDSSVHGIFVSHPLPAGINEMEIAKLVDPEKDIEGRNPLNMGYLIYGKEDFAPCTATAVVRILTSVTSVTGKQVVIIGRSTTVGQPAAIMLLRRDRSATVTVCHSKTRDIPSITKKADIIIVAVGKAGFLKKDMVKEEAVVIDVGINILDGKIAGDVEQSVQEIAYLTPVPGGVGLVTTSVLMNRVAKNASRGDSN.

NADP(+) is bound by residues 155 to 157 (GRS), Ser-182, and Ile-223.

It belongs to the tetrahydrofolate dehydrogenase/cyclohydrolase family. In terms of assembly, homodimer.

It carries out the reaction (6R)-5,10-methylene-5,6,7,8-tetrahydrofolate + NADP(+) = (6R)-5,10-methenyltetrahydrofolate + NADPH. It catalyses the reaction (6R)-5,10-methenyltetrahydrofolate + H2O = (6R)-10-formyltetrahydrofolate + H(+). The protein operates within one-carbon metabolism; tetrahydrofolate interconversion. Catalyzes the oxidation of 5,10-methylenetetrahydrofolate to 5,10-methenyltetrahydrofolate and then the hydrolysis of 5,10-methenyltetrahydrofolate to 10-formyltetrahydrofolate. The polypeptide is Bifunctional protein FolD (Pseudothermotoga lettingae (strain ATCC BAA-301 / DSM 14385 / NBRC 107922 / TMO) (Thermotoga lettingae)).